A 203-amino-acid polypeptide reads, in one-letter code: Nascent polypeptide-associated complex subunit alpha (203 aa).

Residues methionine 1–valine 19 show a composition bias toward basic and acidic residues. The segment at methionine 1–histidine 45 is disordered. Acidic residues predominate over residues aspartate 21–glutamate 32. The NAC-A/B domain occupies serine 46–alanine 111. Residues glutamine 118–lysine 167 are disordered. Residues alanine 125 to glutamate 150 show a composition bias toward basic and acidic residues. Acidic residues predominate over residues glutamate 151–glycine 163. The UBA domain maps to leucine 164–isoleucine 203.

Belongs to the NAC-alpha family. In terms of assembly, part of the nascent polypeptide-associated complex (NAC), consisting of egd2 and egd1. NAC associates with ribosomes via egd1.

The protein resides in the cytoplasm. Its subcellular location is the nucleus. Component of the nascent polypeptide-associated complex (NAC), a dynamic component of the ribosomal exit tunnel, protecting the emerging polypeptides from interaction with other cytoplasmic proteins to ensure appropriate nascent protein targeting. The NAC complex also promotes mitochondrial protein import by enhancing productive ribosome interactions with the outer mitochondrial membrane and blocks the inappropriate interaction of ribosomes translating non-secretory nascent polypeptides with translocation sites in the membrane of the endoplasmic reticulum. Egd2 may also be involved in transcription regulation. This Emericella nidulans (strain FGSC A4 / ATCC 38163 / CBS 112.46 / NRRL 194 / M139) (Aspergillus nidulans) protein is Nascent polypeptide-associated complex subunit alpha (egd2).